A 520-amino-acid chain; its full sequence is Cobyric acid synthase (520 aa).

One can recognise a GATase cobBQ-type domain in the interval 275–453 (VLRVAVIRLP…WHGVLENDAF (179 aa)). The Nucleophile role is filled by C356. H445 is a catalytic residue.

This sequence belongs to the CobB/CobQ family. CobQ subfamily.

It participates in cofactor biosynthesis; adenosylcobalamin biosynthesis. Functionally, catalyzes amidations at positions B, D, E, and G on adenosylcobyrinic A,C-diamide. NH(2) groups are provided by glutamine, and one molecule of ATP is hydrogenolyzed for each amidation. The sequence is that of Cobyric acid synthase from Frankia casuarinae (strain DSM 45818 / CECT 9043 / HFP020203 / CcI3).